The chain runs to 238 residues: ATP-dependent dethiobiotin synthetase BioD (238 aa).

12-17 (GVGKTV) contributes to the ATP binding site. A Mg(2+)-binding site is contributed by Thr-16. The active site involves Lys-37. Thr-41 is a binding site for substrate. ATP is bound by residues Asp-50, 109–112 (EGAG), 170–171 (GS), and 200–202 (PAG). Residues Asp-50 and Glu-109 each contribute to the Mg(2+) site.

The protein belongs to the dethiobiotin synthetase family. As to quaternary structure, homodimer. Requires Mg(2+) as cofactor.

It is found in the cytoplasm. It carries out the reaction (7R,8S)-7,8-diammoniononanoate + CO2 + ATP = (4R,5S)-dethiobiotin + ADP + phosphate + 3 H(+). It functions in the pathway cofactor biosynthesis; biotin biosynthesis; biotin from 7,8-diaminononanoate: step 1/2. Its function is as follows. Catalyzes a mechanistically unusual reaction, the ATP-dependent insertion of CO2 between the N7 and N8 nitrogen atoms of 7,8-diaminopelargonic acid (DAPA, also called 7,8-diammoniononanoate) to form a ureido ring. In Frankia casuarinae (strain DSM 45818 / CECT 9043 / HFP020203 / CcI3), this protein is ATP-dependent dethiobiotin synthetase BioD.